We begin with the raw amino-acid sequence, 493 residues long: Glutamyl-tRNA(Gln) amidotransferase subunit A (493 aa).

Active-site charge relay system residues include Lys79 and Ser159. The Acyl-ester intermediate role is filled by Ser183.

Belongs to the amidase family. GatA subfamily. In terms of assembly, heterotrimer of A, B and C subunits.

The catalysed reaction is L-glutamyl-tRNA(Gln) + L-glutamine + ATP + H2O = L-glutaminyl-tRNA(Gln) + L-glutamate + ADP + phosphate + H(+). Functionally, allows the formation of correctly charged Gln-tRNA(Gln) through the transamidation of misacylated Glu-tRNA(Gln) in organisms which lack glutaminyl-tRNA synthetase. The reaction takes place in the presence of glutamine and ATP through an activated gamma-phospho-Glu-tRNA(Gln). This Brucella suis (strain ATCC 23445 / NCTC 10510) protein is Glutamyl-tRNA(Gln) amidotransferase subunit A.